We begin with the raw amino-acid sequence, 156 residues long: Large ribosomal subunit protein uL22 (156 aa).

This sequence belongs to the universal ribosomal protein uL22 family. As to quaternary structure, part of the 50S ribosomal subunit.

In terms of biological role, this protein binds specifically to 23S rRNA. It makes multiple contacts with different domains of the 23S rRNA in the assembled 50S subunit and ribosome. The globular domain of the protein is located near the polypeptide exit tunnel on the outside of the subunit, while an extended beta-hairpin is found that lines the wall of the exit tunnel in the center of the 70S ribosome. The protein is Large ribosomal subunit protein uL22 of Sulfolobus acidocaldarius (strain ATCC 33909 / DSM 639 / JCM 8929 / NBRC 15157 / NCIMB 11770).